Here is a 938-residue protein sequence, read N- to C-terminus: Isoleucine--tRNA ligase (938 aa).

A 'HIGH' region motif is present at residues 58–68 (PYANGSIHIGH). Lysine 183 is modified (N6-acetyllysine). Glutamate 561 is a binding site for L-isoleucyl-5'-AMP. Residues 602–606 (KMSKS) carry the 'KMSKS' region motif. Lysine 605 is an ATP binding site. 4 residues coordinate Zn(2+): cysteine 901, cysteine 904, cysteine 921, and cysteine 924.

This sequence belongs to the class-I aminoacyl-tRNA synthetase family. IleS type 1 subfamily. In terms of assembly, monomer. Zn(2+) is required as a cofactor.

The protein localises to the cytoplasm. The enzyme catalyses tRNA(Ile) + L-isoleucine + ATP = L-isoleucyl-tRNA(Ile) + AMP + diphosphate. Its function is as follows. Catalyzes the attachment of isoleucine to tRNA(Ile). As IleRS can inadvertently accommodate and process structurally similar amino acids such as valine, to avoid such errors it has two additional distinct tRNA(Ile)-dependent editing activities. One activity is designated as 'pretransfer' editing and involves the hydrolysis of activated Val-AMP. The other activity is designated 'posttransfer' editing and involves deacylation of mischarged Val-tRNA(Ile). The protein is Isoleucine--tRNA ligase of Escherichia coli O6:K15:H31 (strain 536 / UPEC).